The primary structure comprises 266 residues: Proteasome subunit alpha type-1 (266 aa).

The protein belongs to the peptidase T1A family. The 26S proteasome consists of a 20S proteasome core and two 19S regulatory subunits. The 20S proteasome core is composed of 28 subunits that are arranged in four stacked rings, resulting in a barrel-shaped structure. The two end rings are each formed by seven alpha subunits, and the two central rings are each formed by seven beta subunits. The catalytic chamber with the active sites is on the inside of the barrel.

The protein localises to the cytoplasm. The protein resides in the nucleus. Functionally, the proteasome is a multicatalytic proteinase complex which is characterized by its ability to cleave peptides with Arg, Phe, Tyr, Leu, and Glu adjacent to the leaving group at neutral or slightly basic pH. The proteasome has an ATP-dependent proteolytic activity. This chain is Proteasome subunit alpha type-1, found in Trypanosoma brucei brucei.